Consider the following 80-residue polypeptide: Exodeoxyribonuclease 7 small subunit (80 aa).

It belongs to the XseB family. As to quaternary structure, heterooligomer composed of large and small subunits.

Its subcellular location is the cytoplasm. It carries out the reaction Exonucleolytic cleavage in either 5'- to 3'- or 3'- to 5'-direction to yield nucleoside 5'-phosphates.. Its function is as follows. Bidirectionally degrades single-stranded DNA into large acid-insoluble oligonucleotides, which are then degraded further into small acid-soluble oligonucleotides. The protein is Exodeoxyribonuclease 7 small subunit of Escherichia coli O6:K15:H31 (strain 536 / UPEC).